The following is a 130-amino-acid chain: Small ribosomal subunit protein uS11 (130 aa).

The protein belongs to the universal ribosomal protein uS11 family. As to quaternary structure, part of the 30S ribosomal subunit. Interacts with proteins S7 and S18. Binds to IF-3.

Functionally, located on the platform of the 30S subunit, it bridges several disparate RNA helices of the 16S rRNA. Forms part of the Shine-Dalgarno cleft in the 70S ribosome. This Prochlorococcus marinus subsp. pastoris (strain CCMP1986 / NIES-2087 / MED4) protein is Small ribosomal subunit protein uS11.